Reading from the N-terminus, the 79-residue chain is Short neurotoxin 3 (79 aa).

The first 21 residues, 1-21, serve as a signal peptide directing secretion; sequence MKTLLLTLVMVTIMCLDLGYT. 4 disulfide bridges follow: C24-C41, C34-C59, C63-C71, and C72-C77.

The protein belongs to the three-finger toxin family. Short-chain subfamily. Type III alpha-neurotoxin sub-subfamily. As to expression, expressed by the venom gland.

Its subcellular location is the secreted. Binds with high affinity to muscle nicotinic acetylcholine receptor (nAChR) and hinders acetylcholine binding to the receptor, thereby impairing neuromuscular transmission. Competes with the binding of alpha-bungarotoxin on muscle AChR (from Torpedo) with an IC(50) of 0.30 uM. Causes muscle paralysis, spasms and increased respiration. This chain is Short neurotoxin 3, found in Pseudonaja textilis (Eastern brown snake).